We begin with the raw amino-acid sequence, 157 residues long: uncharacterized protein (157 aa).

Residue K115 forms an Isoglutamyl lysine isopeptide (Lys-Gln) (interchain with Q-Cter in protein Pup) linkage.

This is an uncharacterized protein from Mycolicibacterium smegmatis (strain ATCC 700084 / mc(2)155) (Mycobacterium smegmatis).